Here is a 488-residue protein sequence, read N- to C-terminus: MATANTSSGSMNGVGPVTMDSSTSGASREARIATHSHIKGLGLSDDGTALPSAQGFVGQKAAREACGLVLDLIRMKKFAGKALLLAGGPGTGKTALALAVSQELGHKVPFCPMVGSEVYSSEVKKTEVLMENFRRAIGLRVRETKEVYEGEITELTPTEAENPLSGYGKTIAHVVIALKTVKGTKQLRLDPSIYESIMKERISVGDVIYIEANTGAVKRVGRSDAYATEFDLEAEEYVPLPKGEVHKRKEVVQDVTLHDLDMANAKPQGGQDIMSVVGQLVKGRRTEVTDKLRGEINRVVDKYIEQGIAELVPGVLFIDEVHMLDMECFTYLNRALESTISPHVILATNRGQCMVRGTEYEGPASGTGIVAPHGIPLDLLDRCMIVRTMPYEKDEIREVLRLRAKVEGHLIAEDALEKLTEEGVSSSLRFALQLLSPSSILAKTAGRSEITIKDIVEANELFIDARRSAKVLMSIGEATTEAVPMETS.

Polar residues predominate over residues 1 to 11 (MATANTSSGSM). The tract at residues 1–29 (MATANTSSGSMNGVGPVTMDSSTSGASRE) is disordered. 87-94 (GGPGTGKT) lines the ATP pocket.

This sequence belongs to the RuvB family. As to quaternary structure, may form heterododecamers with RVB2. Component of the SWR1 chromatin remodeling complex, the INO80 chromatin remodeling complex, and of the R2TP complex.

The protein localises to the nucleus. It catalyses the reaction ATP + H2O = ADP + phosphate + H(+). Its function is as follows. DNA helicase which participates in several chromatin remodeling complexes, including the SWR1 and the INO80 complexes. The SWR1 complex mediates the ATP-dependent exchange of histone H2A for the H2A variant HZT1 leading to transcriptional regulation of selected genes by chromatin remodeling. The INO80 complex remodels chromatin by shifting nucleosomes and is involved in DNA repair. Also involved in pre-rRNA processing. The sequence is that of RuvB-like helicase 1 (RVB1) from Mycosarcoma maydis (Corn smut fungus).